A 458-amino-acid polypeptide reads, in one-letter code: Forkhead box protein J1-A (458 aa).

Positions 68-78 (TGQHTSPSSHS) are enriched in polar residues. A disordered region spans residues 68–99 (TGQHTSPSSHSHLMGSDAPSSPLAGDPASIGM). The fork-head DNA-binding region spans 142–236 (KPPYSYATLI…LNGAYKKRRL (95 aa)). A compositionally biased stretch (basic residues) spans 305–321 (TNKRKQPYNHRTGKTPR). Residues 305-324 (TNKRKQPYNHRTGKTPRRSS) form a disordered region.

This sequence belongs to the FOXJ1 family. In terms of tissue distribution, expressed in floor plate, dorsal forerunner cells, Kupffers vesicle, the floor plate, pronephric ducts and kidney.

The protein resides in the nucleus. Its function is as follows. Key transcription factor required for motile ciliogenesis. Activates genes essential for motile cilia formation and function. Its activity is sufficient for ectopic development of cilia that resemble motile cilia. The polypeptide is Forkhead box protein J1-A (Danio rerio (Zebrafish)).